A 364-amino-acid chain; its full sequence is Dual-specificity RNA methyltransferase RlmN (364 aa).

Residue Glu-91 is the Proton acceptor of the active site. Residues 102 to 337 (GTLRITQCLS…AIIRKSKGQD (236 aa)) enclose the Radical SAM core domain. A disulfide bridge connects residues Cys-109 and Cys-342. [4Fe-4S] cluster-binding residues include Cys-116, Cys-120, and Cys-123. S-adenosyl-L-methionine is bound by residues 169 to 170 (GE), Ser-201, 223 to 225 (SLH), and Asn-299. Catalysis depends on Cys-342, which acts as the S-methylcysteine intermediate.

Belongs to the radical SAM superfamily. RlmN family. It depends on [4Fe-4S] cluster as a cofactor.

It is found in the cytoplasm. It catalyses the reaction adenosine(2503) in 23S rRNA + 2 reduced [2Fe-2S]-[ferredoxin] + 2 S-adenosyl-L-methionine = 2-methyladenosine(2503) in 23S rRNA + 5'-deoxyadenosine + L-methionine + 2 oxidized [2Fe-2S]-[ferredoxin] + S-adenosyl-L-homocysteine. The enzyme catalyses adenosine(37) in tRNA + 2 reduced [2Fe-2S]-[ferredoxin] + 2 S-adenosyl-L-methionine = 2-methyladenosine(37) in tRNA + 5'-deoxyadenosine + L-methionine + 2 oxidized [2Fe-2S]-[ferredoxin] + S-adenosyl-L-homocysteine. Functionally, specifically methylates position 2 of adenine 2503 in 23S rRNA and position 2 of adenine 37 in tRNAs. m2A2503 modification seems to play a crucial role in the proofreading step occurring at the peptidyl transferase center and thus would serve to optimize ribosomal fidelity. This is Dual-specificity RNA methyltransferase RlmN from Nitratidesulfovibrio vulgaris (strain DP4) (Desulfovibrio vulgaris).